Consider the following 231-residue polypeptide: Somatolactin-1 (231 aa).

A signal peptide spans 1–24 (MRMIRAIKQGQWAVLLWPYLLTAS). Intrachain disulfides connect cysteine 29-cysteine 39, cysteine 89-cysteine 205, and cysteine 222-cysteine 230. Asparagine 145 is a glycosylation site (N-linked (GlcNAc...) asparagine).

This sequence belongs to the somatotropin/prolactin family. Pituitary gland.

It is found in the secreted. This chain is Somatolactin-1, found in Sparus aurata (Gilthead sea bream).